A 142-amino-acid polypeptide reads, in one-letter code: General odorant-binding protein 99a (142 aa).

An N-terminal signal peptide occupies residues 1 to 16; that stretch reads MKVFVAICVLIGLASA. Cystine bridges form between C33–C64, C60–C116, and C105–C125.

Belongs to the PBP/GOBP family. Expressed in larval chemosensory organ. Specifically expressed exclusively in a subset of chemosensory sensilla on the third antennal segment.

It is found in the secreted. Its function is as follows. Present in the aqueous fluid surrounding olfactory sensory dendrites and are thought to aid in the capture and transport of hydrophobic odorants into and through this fluid. In Drosophila melanogaster (Fruit fly), this protein is General odorant-binding protein 99a (Obp99a).